The chain runs to 135 residues: HTH-type transcriptional regulator ZntR homolog (135 aa).

Residues 1-69 (MKIGALAKAL…LSEIKSLLNL (69 aa)) enclose the HTH merR-type domain. A DNA-binding region (H-T-H motif) is located at residues 4–23 (GALAKALGCTVETIRYYEQQ).

Its function is as follows. Transcriptional regulator. The sequence is that of HTH-type transcriptional regulator ZntR homolog (zntR) from Haemophilus influenzae (strain ATCC 51907 / DSM 11121 / KW20 / Rd).